The following is a 344-amino-acid chain: Cell cycle control protein 50C (344 aa).

The Cytoplasmic portion of the chain corresponds to 1 to 34; sequence MEETPQHCLSRLPDNSALKQQELPAHRLYFTARR. A helical membrane pass occupies residues 35-55; sequence VLFVFFTTGIFCLCMGIILIL. At 56 to 306 the chain is on the extracellular side; it reads SARSTQEIEI…STLTWCGGNS (251 aa). N-linked (GlcNAc...) asparagine glycans are attached at residues Asn-66 and Asn-261. The chain crosses the membrane as a helical span at residues 307–327; sequence LFLGLAYTVTGAITWLASFTM. The Cytoplasmic portion of the chain corresponds to 328–344; sequence MAIHITLKNKQMSFFHQ.

Belongs to the CDC50/LEM3 family. As to expression, specifically expressed in testis.

The protein resides in the membrane. The sequence is that of Cell cycle control protein 50C (TMEM30C) from Macaca fascicularis (Crab-eating macaque).